The sequence spans 87 residues: Small ribosomal subunit protein uS17 (87 aa).

Belongs to the universal ribosomal protein uS17 family. As to quaternary structure, part of the 30S ribosomal subunit.

Its function is as follows. One of the primary rRNA binding proteins, it binds specifically to the 5'-end of 16S ribosomal RNA. The sequence is that of Small ribosomal subunit protein uS17 from Neisseria meningitidis serogroup C (strain 053442).